Here is a 396-residue protein sequence, read N- to C-terminus: Elongation factor Tu (396 aa).

Residues 10-206 (KPHVNVGTIG…VLDTYIPEPE (197 aa)) enclose the tr-type G domain. A G1 region spans residues 19–26 (GHVDHGKT). 19–26 (GHVDHGKT) is a binding site for GTP. T26 serves as a coordination point for Mg(2+). The G2 stretch occupies residues 60 to 64 (GITIN). The interval 81–84 (DCPG) is G3. GTP-binding positions include 81 to 85 (DCPGH) and 136 to 139 (NKCD). The tract at residues 136–139 (NKCD) is G4. The segment at 174–176 (SAT) is G5.

This sequence belongs to the TRAFAC class translation factor GTPase superfamily. Classic translation factor GTPase family. EF-Tu/EF-1A subfamily. In terms of assembly, monomer.

The protein localises to the cytoplasm. The catalysed reaction is GTP + H2O = GDP + phosphate + H(+). Functionally, GTP hydrolase that promotes the GTP-dependent binding of aminoacyl-tRNA to the A-site of ribosomes during protein biosynthesis. The polypeptide is Elongation factor Tu (Psychrobacter cryohalolentis (strain ATCC BAA-1226 / DSM 17306 / VKM B-2378 / K5)).